The chain runs to 291 residues: Glycine--tRNA ligase alpha subunit (291 aa).

Belongs to the class-II aminoacyl-tRNA synthetase family. Tetramer of two alpha and two beta subunits.

It is found in the cytoplasm. It catalyses the reaction tRNA(Gly) + glycine + ATP = glycyl-tRNA(Gly) + AMP + diphosphate. The protein is Glycine--tRNA ligase alpha subunit of Geobacter metallireducens (strain ATCC 53774 / DSM 7210 / GS-15).